We begin with the raw amino-acid sequence, 316 residues long: Large ribosomal subunit protein uL4 (316 aa).

The large ribosomal subunit protein uL4 stretch occupies residues 1–211 (MASCVVKNWQ…EQLKARWGSD (211 aa)). Disordered stretches follow at residues 44 to 76 (ARQG…ARAG) and 231 to 316 (EDQA…ESDD). A compositionally biased stretch (basic residues) spans 60–71 (GGRKPWKQKGTG). The unknown stretch occupies residues 212–316 (AAPAVLETPS…TAPAEEESDD (105 aa)). Over residues 255-270 (QTPAQPEAQENQAALQ) the composition is skewed to low complexity. Acidic residues-rich tracts occupy residues 281–291 (EQTEEPQDPAE) and 301–316 (TVEE…ESDD).

The protein belongs to the universal ribosomal protein uL4 family. In terms of assembly, part of the 50S ribosomal subunit.

Functionally, one of the primary rRNA binding proteins, this protein initially binds near the 5'-end of the 23S rRNA. It is important during the early stages of 50S assembly. It makes multiple contacts with different domains of the 23S rRNA in the assembled 50S subunit and ribosome. Its function is as follows. Forms part of the polypeptide exit tunnel. The chain is Large ribosomal subunit protein uL4 from Synechococcus sp. (strain JA-2-3B'a(2-13)) (Cyanobacteria bacterium Yellowstone B-Prime).